A 305-amino-acid chain; its full sequence is Phosphopantetheine adenylyltransferase (305 aa).

It belongs to the eukaryotic CoaD family.

Its subcellular location is the cytoplasm. The protein resides in the nucleus. It carries out the reaction (R)-4'-phosphopantetheine + ATP + H(+) = 3'-dephospho-CoA + diphosphate. In terms of biological role, reversibly transfers an adenylyl group from ATP to 4'-phosphopantetheine, yielding dephospho-CoA (dPCoA) and pyrophosphate. Plays a role in the physiological regulation of the intracellular CoA concentration. The sequence is that of Phosphopantetheine adenylyltransferase (CAB4) from Saccharomyces cerevisiae (strain ATCC 204508 / S288c) (Baker's yeast).